Reading from the N-terminus, the 285-residue chain is 2-dehydro-3-deoxyphosphooctonate aldolase (285 aa).

The protein belongs to the KdsA family.

The protein localises to the cytoplasm. It carries out the reaction D-arabinose 5-phosphate + phosphoenolpyruvate + H2O = 3-deoxy-alpha-D-manno-2-octulosonate-8-phosphate + phosphate. Its pathway is carbohydrate biosynthesis; 3-deoxy-D-manno-octulosonate biosynthesis; 3-deoxy-D-manno-octulosonate from D-ribulose 5-phosphate: step 2/3. It participates in bacterial outer membrane biogenesis; lipopolysaccharide biosynthesis. The chain is 2-dehydro-3-deoxyphosphooctonate aldolase from Leptothrix cholodnii (strain ATCC 51168 / LMG 8142 / SP-6) (Leptothrix discophora (strain SP-6)).